Here is a 351-residue protein sequence, read N- to C-terminus: Anthranilate phosphoribosyltransferase (351 aa).

5-phospho-alpha-D-ribose 1-diphosphate contacts are provided by residues glycine 92, 95 to 96 (GD), threonine 100, 102 to 105 (NIST), 120 to 128 (KHGNRAASS), and serine 132. Glycine 92 is a binding site for anthranilate. Serine 104 contacts Mg(2+). Asparagine 123 provides a ligand contact to anthranilate. Arginine 178 lines the anthranilate pocket. Residues aspartate 236 and glutamate 237 each coordinate Mg(2+).

Belongs to the anthranilate phosphoribosyltransferase family. Homodimer. The cofactor is Mg(2+).

The enzyme catalyses N-(5-phospho-beta-D-ribosyl)anthranilate + diphosphate = 5-phospho-alpha-D-ribose 1-diphosphate + anthranilate. The protein operates within amino-acid biosynthesis; L-tryptophan biosynthesis; L-tryptophan from chorismate: step 2/5. In terms of biological role, catalyzes the transfer of the phosphoribosyl group of 5-phosphorylribose-1-pyrophosphate (PRPP) to anthranilate to yield N-(5'-phosphoribosyl)-anthranilate (PRA). The polypeptide is Anthranilate phosphoribosyltransferase (Deinococcus geothermalis (strain DSM 11300 / CIP 105573 / AG-3a)).